The chain runs to 451 residues: CCAAT/enhancer-binding protein (451 aa).

Disordered stretches follow at residues 210 to 236 (TYNNHSSDENSSVGSDSSSTIKEEPID), 267 to 298 (QSNNLSNNNSSSNNSSNNSSNNSSNSNTNSTN), and 328 to 389 (LKHH…AKVR). 3 stretches are compositionally biased toward low complexity: residues 218–228 (ENSSVGSDSSS), 268–298 (SNNLSNNNSSSNNSSNNSSNNSSNSNTNSTN), and 334–350 (LQQTQQQHAQQQQQHAQ). The span at 359–370 (KHVDKGTEEYRR) shows a compositional bias: basic and acidic residues. The bZIP domain occupies 365–428 (TEEYRRRRER…SLHKQIYMQL (64 aa)). Residues 369–398 (RRRRERNNIAVRKSREKAKVRSKEVEERVK) are basic motif. The leucine-zipper stretch occupies residues 400-407 (LLKEKDAL).

It belongs to the bZIP family. C/EBP subfamily. Binds DNA as a dimer and can form stable heterodimers.

Its subcellular location is the nucleus. May be required for the expression of gene products mediating border cell migration. Among the DNA sequences that this protein binds with high affinity is a conserved site within the promoter of its gene. This Drosophila virilis (Fruit fly) protein is CCAAT/enhancer-binding protein (slbo).